A 147-amino-acid chain; its full sequence is Ribonuclease P protein component 2 (147 aa).

It belongs to the eukaryotic/archaeal RNase P protein component 2 family. As to quaternary structure, consists of a catalytic RNA component and at least 4-5 protein subunits.

It localises to the cytoplasm. It catalyses the reaction Endonucleolytic cleavage of RNA, removing 5'-extranucleotides from tRNA precursor.. Functionally, part of ribonuclease P, a protein complex that generates mature tRNA molecules by cleaving their 5'-ends. This is Ribonuclease P protein component 2 from Methanocorpusculum labreanum (strain ATCC 43576 / DSM 4855 / Z).